A 257-amino-acid chain; its full sequence is UPF0246 protein CLH_2088 (257 aa).

The protein belongs to the UPF0246 family.

This Clostridium botulinum (strain Alaska E43 / Type E3) protein is UPF0246 protein CLH_2088.